A 128-amino-acid chain; its full sequence is S-adenosylmethionine decarboxylase proenzyme (128 aa).

The active-site Schiff-base intermediate with substrate; via pyruvic acid is the S61. S61 is subject to Pyruvic acid (Ser); by autocatalysis. H66 (proton acceptor; for processing activity) is an active-site residue. C81 acts as the Proton donor; for catalytic activity in catalysis.

This sequence belongs to the prokaryotic AdoMetDC family. Type 1 subfamily. Heterotetramer of two alpha and two beta chains arranged as a dimer of alpha/beta heterodimers. Pyruvate serves as cofactor. In terms of processing, is synthesized initially as an inactive proenzyme. Formation of the active enzyme involves a self-maturation process in which the active site pyruvoyl group is generated from an internal serine residue via an autocatalytic post-translational modification. Two non-identical subunits are generated from the proenzyme in this reaction, and the pyruvate is formed at the N-terminus of the alpha chain, which is derived from the carboxyl end of the proenzyme. The post-translation cleavage follows an unusual pathway, termed non-hydrolytic serinolysis, in which the side chain hydroxyl group of the serine supplies its oxygen atom to form the C-terminus of the beta chain, while the remainder of the serine residue undergoes an oxidative deamination to produce ammonia and the pyruvoyl group blocking the N-terminus of the alpha chain.

The enzyme catalyses S-adenosyl-L-methionine + H(+) = S-adenosyl 3-(methylsulfanyl)propylamine + CO2. It functions in the pathway amine and polyamine biosynthesis; S-adenosylmethioninamine biosynthesis; S-adenosylmethioninamine from S-adenosyl-L-methionine: step 1/1. Catalyzes the decarboxylation of S-adenosylmethionine to S-adenosylmethioninamine (dcAdoMet), the propylamine donor required for the synthesis of the polyamines spermine and spermidine from the diamine putrescine. The chain is S-adenosylmethionine decarboxylase proenzyme from Parasynechococcus marenigrum (strain WH8102).